We begin with the raw amino-acid sequence, 100 residues long: MEIAVIGNSEFILGFRLAGIRKTYTAENDEKLLESVNSVLADGQVGILVLNSSDMERLPRRLRTTLENSVKPTVIALGGEEGGLSMRERIKRSVGVDLWK.

The protein belongs to the V-ATPase F subunit family. Has multiple subunits with at least A(3), B(3), C, D, E, F, H, I and proteolipid K(x).

It localises to the cell membrane. Functionally, component of the A-type ATP synthase that produces ATP from ADP in the presence of a proton gradient across the membrane. The sequence is that of A-type ATP synthase subunit F from Methanoregula boonei (strain DSM 21154 / JCM 14090 / 6A8).